Reading from the N-terminus, the 377-residue chain is Progesterone receptor (377 aa).

The interval 1–15 is modulating, Pro-Rich; that stretch reads EASQSPQYSFESLPQ. Positions 16–90 form a DNA-binding region, nuclear receptor; that stretch reads KICLICGDEA…AGMVLGGRKF (75 aa). 2 consecutive NR C4-type zinc fingers follow at residues 18-38 and 54-78; these read CLIC…CGSC and CAGR…LRKC. Position 127 is a phosphoserine (serine 127). The NR LBD domain occupies 130–364; it reads QDLQLIPPLI…EFPEMMSEVI (235 aa). The tract at residues 138-377 is AF2; mediates transcriptional activation; the sequence is LINLLMSIEP…LPKILAGMVK (240 aa).

It belongs to the nuclear hormone receptor family. NR3 subfamily. As to quaternary structure, interacts with CUEDC2, SMARD1 and with UNC45A. Interacts with PRMT2. Interacts with NCOA2 and NCOA1. Interacts with KLF9. Interacts with GTF2B. In terms of processing, palmitoylated by ZDHHC7 and ZDHHC21. Palmitoylation is required for plasma membrane targeting and for rapid intracellular signaling via ERK and AKT kinases and cAMP generation.

It is found in the nucleus. Its function is as follows. The steroid hormones and their receptors are involved in the regulation of eukaryotic gene expression and affect cellular proliferation and differentiation in target tissues. Transcriptional activator of several progesteron-dependent promoters in a variety of cell types. Involved in activation of SRC-dependent MAPK signaling on hormone stimulation. This chain is Progesterone receptor (PGR), found in Ovis aries (Sheep).